The following is a 43-amino-acid chain: Antimicrobial protein PcfHb (43 aa).

As to quaternary structure, possible monomer. As to expression, expressed in mucus-secreting tissues.

It is found in the secreted. Functionally, shows antimicrobial activity against M.luteus (MIC=4 uM) and E.coli (MIC=12 uM), as well as against the yeast C.tropicalis (MIC=4 uM). Shows a pro-inflammatory effect, since the topical application of the protein induces an increase of cellular recruitment characterized by an increase in the number of leukocyte rolling. Does not show hemolytic activity on human erythrocytes (at doses up to 100 uM). The sequence is that of Antimicrobial protein PcfHb from Potamotrygon cf. henlei (Freshwater stingray).